The chain runs to 206 residues: Guanylate kinase (206 aa).

The region spanning F5 to K183 is the Guanylate kinase-like domain. Residue G12–S19 coordinates ATP.

This sequence belongs to the guanylate kinase family.

The protein localises to the cytoplasm. The catalysed reaction is GMP + ATP = GDP + ADP. In terms of biological role, essential for recycling GMP and indirectly, cGMP. This Helicobacter pylori (strain ATCC 700392 / 26695) (Campylobacter pylori) protein is Guanylate kinase (gmk).